The following is a 574-amino-acid chain: ESX-1 secretion system protein EccA1 (574 aa).

Position 335-342 (335-342 (GPPGTGKT)) interacts with ATP.

Belongs to the CbxX/CfxQ family. As to quaternary structure, part of the ESX-1 / type VII secretion system (T7SS), which is composed of cytosolic and membrane components.

It localises to the cytoplasm. In terms of biological role, part of the ESX-1 / type VII specialized secretion system (T7SS), which exports several proteins including EsxA and EsxB. Plays a role in DNA conjugation, in both donor and recipient strains. EccA1 exhibits ATPase activity and may provide energy for the export of ESX-1 substrates. The protein is ESX-1 secretion system protein EccA1 of Mycolicibacterium smegmatis (strain ATCC 700084 / mc(2)155) (Mycobacterium smegmatis).